A 105-amino-acid polypeptide reads, in one-letter code: DNA-directed RNA polymerase RPB9 homolog (105 aa).

Zn(2+) contacts are provided by Cys-4, Cys-7, Cys-24, Cys-26, Cys-73, Cys-76, and Cys-96. The segment at 4–26 adopts a C4-type; atypical zinc-finger fold; the sequence is CKACSSCMVRTYVDGNIIFRCSC.

The protein belongs to the Asfivirus DNA-directed RNA polymerase RPB9 homolog family. As to quaternary structure, part of the viral DNA-directed RNA polymerase that consists of 8 polII-like subunits (RPB1, RPB2, RPB3, RPB5, RPB6, RPB7, RPB9, RPB10), a capping enzyme and a termination factor.

Its subcellular location is the host cytoplasm. In terms of biological role, component of the DNA-directed RNA polymerase (RNAP) that catalyzes the transcription in the cytoplasm of viral DNA into RNA using the four ribonucleoside triphosphates as substrates. The polypeptide is DNA-directed RNA polymerase RPB9 homolog (African swine fever virus (isolate Pig/Kenya/KEN-50/1950) (ASFV)).